We begin with the raw amino-acid sequence, 377 residues long: MHCVQYQAGRCHSCQWLSIPYSRQLEDKQRHLSALLSGHSVAQWLSAQPSAELAMRNKAKMVVSGSVERPLLGMLQRDGSGVDLCDCPLYPDSFAVVFAALKSFIPRAGLTPYSVARRRGELKYLLLTESRLNGEMMLRFVLRSETKLAQLRQALPWLQAQLPQLAVISVNIQPVHMAILEGEREIFLTSQQVLSESFNGVPLYIRPQSFFQTNPAVAQALYAQARDWVQALGVTEMWDLFCGVGGFGLHCATPEMTLTGIEISAGAIACARRSAAQLGLTKVSFAALDSGAFADAHSAVPQLVLVNPPRRGIGAALCDYMNRMAPPYILYSSCNAQSMVQDIERLADYRIEKVRLFDMFPHTAHYEVLTLLVRASA.

The [4Fe-4S] cluster site is built by Cys3, Cys11, Cys14, and Cys87. Residues Gln212, Phe241, Glu262, and Asn307 each contribute to the S-adenosyl-L-methionine site. Cys334 (nucleophile) is an active-site residue.

This sequence belongs to the class I-like SAM-binding methyltransferase superfamily. RNA M5U methyltransferase family. RlmC subfamily.

The catalysed reaction is uridine(747) in 23S rRNA + S-adenosyl-L-methionine = 5-methyluridine(747) in 23S rRNA + S-adenosyl-L-homocysteine + H(+). In terms of biological role, catalyzes the formation of 5-methyl-uridine at position 747 (m5U747) in 23S rRNA. The polypeptide is 23S rRNA (uracil(747)-C(5))-methyltransferase RlmC (Edwardsiella ictaluri (strain 93-146)).